Reading from the N-terminus, the 307-residue chain is MLSVVPSPVLVRAPSKVNLHLGVGDLRPDGYHDLTTVFQALSLGDDLRISPASALTVKVNGEGAAEVPTDRTNLVWKAAVRLAHLVGRAPLVEIVIDKGIPVAGGMAGGSADAAAALVGLNELWDMGLGRDELSALAAELGSDVPFALHGGTALGTGRGERLLPVLSRNTFHWVLAFAKGGLSTPAVFAELDRLREHGDPPRLGDPQALMQALASGDPAQLAPLLGNDLQAAAVSLKPELRRTLRAGVTAGALAGLVSGSGPTCAFLCESADAAVAVAAELAGAGVARSVRTASGPVPGARVIDPES.

Lys-16 is an active-site residue. 101–111 (PVAGGMAGGSA) lines the ATP pocket. Asp-143 is a catalytic residue.

The protein belongs to the GHMP kinase family. IspE subfamily.

It catalyses the reaction 4-CDP-2-C-methyl-D-erythritol + ATP = 4-CDP-2-C-methyl-D-erythritol 2-phosphate + ADP + H(+). It functions in the pathway isoprenoid biosynthesis; isopentenyl diphosphate biosynthesis via DXP pathway; isopentenyl diphosphate from 1-deoxy-D-xylulose 5-phosphate: step 3/6. In terms of biological role, catalyzes the phosphorylation of the position 2 hydroxy group of 4-diphosphocytidyl-2C-methyl-D-erythritol. In Nocardia farcinica (strain IFM 10152), this protein is 4-diphosphocytidyl-2-C-methyl-D-erythritol kinase.